The following is a 1093-amino-acid chain: MPRRNDIRKILVIGSGPIVIGQSAEFDYSGTQACKALKAEGYEVVLVNSNPATIMTDPELADRTYIEPLTVKYLDEILRIEAEMLAASGSNGKFAVLPTVGGQTALNLAVELADAGILDKYGVELIGAKLDAIKKAEDRLLFKDAMTRIGLDVPRSALVNNIRDGLEFATKIGFPVIIRPSFTLGGSGGGIGYNREELMEILARGLDLSPVHECLIEESVLGWKEYELEVMRDLADNVIIICSIENMDPMGVHTGDSITVAPAQTLTDREYQAMRDAALLVMREIGVETGGSNVQFAVNPQTGRMTVIEMNPRVSRSSALASKATGFPIAKIAAKLAVGYTLDEIPNDITRMTPACFEPTIDYVVTKIPKWQFEKFPGADENLGPQMKSVGEVMAIGRTFKESLMKALRSLETGKRVGAEVLEPRRLTQRLVTPQPERLNYVRFAFRQGLSVREVARMTSMDPWFLYQIKEITDTIAAIGDATFDNVSPEQLRKAKRMGISDERLAEVWGLTGNEGVAKVRELRQGHGIRPIYKLVDTCAAEFESATPYFYSSYEEEDEAPQTDKRKVIILGSGPNRIGQGIEFDYCCCHAAFALKEDGFEAIMVNCNPETVSTDYDTSDRLYFEPLTLEDVLAIYEHETANGADAGMIVQFGGQTPLNLALRLKQAGVKIIGTSPESIDLAEDRKSFGKLLEQLQIPQPQGATATSVEEALASAERIGYPVLVRPSYVLGGRAMVIAYDAAAVSHYMKEAVEYSQERPILIDHFLEDAVEVDVDALCDGTDVVIAGIMQHIEEAGIHSGDSSCVLPAVDLAPQVLDTIRDYTRKLALSLKVIGLVNLQFAIQRDKVYVIEVNPRASRTVPYVSKATGVPLAKIASRLMTGRKLSEFLPENIASGKDLGTGAHYYVKSPVFPWNKFPGVDTVLGPEMKSTGEVMGVADNFGEAFAKAQLSAGLILPSSGTVFFSVNDHDKAALVPLAKQYIDLGFQIVATEGTAKVLHKAGIQAESVYKVKEGRPNIVDLIKGQRIQLIINTPRGQDTFFDEQAIRRAAVLQRIPTITTIAAARAAAEGIAASQRKHITVNPLQLLHAGHAVK.

The interval 1–412 is carboxyphosphate synthetic domain; sequence MPRRNDIRKI…SLMKALRSLE (412 aa). 12 residues coordinate ATP: R139, R179, G185, G186, E218, V220, E225, G251, V252, H253, Q295, and E309. An ATP-grasp 1 domain is found at 143–338; sequence KDAMTRIGLD…IAKIAAKLAV (196 aa). Q295, E309, and N311 together coordinate Mg(2+). Q295, E309, and N311 together coordinate Mn(2+). The segment at 413–560 is oligomerization domain; it reads TGKRVGAEVL…YSSYEEEDEA (148 aa). A carbamoyl phosphate synthetic domain region spans residues 561–952; that stretch reads PQTDKRKVII…AFAKAQLSAG (392 aa). Residues 689-880 enclose the ATP-grasp 2 domain; the sequence is GKLLEQLQIP…LAKIASRLMT (192 aa). Residues R725, H764, L766, E771, G796, I797, H798, S799, Q839, and E851 each contribute to the ATP site. Mg(2+)-binding residues include Q839, E851, and N853. The Mn(2+) site is built by Q839, E851, and N853. Residues 953-1093 enclose the MGS-like domain; the sequence is LILPSSGTVF…QLLHAGHAVK (141 aa). Residues 953–1093 form an allosteric domain region; it reads LILPSSGTVF…QLLHAGHAVK (141 aa).

It belongs to the CarB family. As to quaternary structure, composed of two chains; the small (or glutamine) chain promotes the hydrolysis of glutamine to ammonia, which is used by the large (or ammonia) chain to synthesize carbamoyl phosphate. Tetramer of heterodimers (alpha,beta)4. Mg(2+) is required as a cofactor. It depends on Mn(2+) as a cofactor.

It carries out the reaction hydrogencarbonate + L-glutamine + 2 ATP + H2O = carbamoyl phosphate + L-glutamate + 2 ADP + phosphate + 2 H(+). The catalysed reaction is hydrogencarbonate + NH4(+) + 2 ATP = carbamoyl phosphate + 2 ADP + phosphate + 2 H(+). The protein operates within amino-acid biosynthesis; L-arginine biosynthesis; carbamoyl phosphate from bicarbonate: step 1/1. It participates in pyrimidine metabolism; UMP biosynthesis via de novo pathway; (S)-dihydroorotate from bicarbonate: step 1/3. Large subunit of the glutamine-dependent carbamoyl phosphate synthetase (CPSase). CPSase catalyzes the formation of carbamoyl phosphate from the ammonia moiety of glutamine, carbonate, and phosphate donated by ATP, constituting the first step of 2 biosynthetic pathways, one leading to arginine and/or urea and the other to pyrimidine nucleotides. The large subunit (synthetase) binds the substrates ammonia (free or transferred from glutamine from the small subunit), hydrogencarbonate and ATP and carries out an ATP-coupled ligase reaction, activating hydrogencarbonate by forming carboxy phosphate which reacts with ammonia to form carbamoyl phosphate. The protein is Carbamoyl phosphate synthase large chain of Acidobacterium capsulatum (strain ATCC 51196 / DSM 11244 / BCRC 80197 / JCM 7670 / NBRC 15755 / NCIMB 13165 / 161).